A 378-amino-acid polypeptide reads, in one-letter code: Ribosomal RNA large subunit methyltransferase G (378 aa).

The protein belongs to the methyltransferase superfamily. RlmG family.

Its subcellular location is the cytoplasm. It carries out the reaction guanosine(1835) in 23S rRNA + S-adenosyl-L-methionine = N(2)-methylguanosine(1835) in 23S rRNA + S-adenosyl-L-homocysteine + H(+). Specifically methylates the guanine in position 1835 (m2G1835) of 23S rRNA. The protein is Ribosomal RNA large subunit methyltransferase G of Salmonella newport (strain SL254).